Consider the following 654-residue polypeptide: Acetyl-coenzyme A synthetase (654 aa).

CoA is bound by residues 191-194 and Thr315; that span reads RRGQ. ATP-binding positions include 391–393, 415–420, Asp506, and Arg521; these read GEP and DTWWQT. Ser529 contributes to the CoA binding site. Arg532 is a binding site for ATP. Positions 543, 545, and 548 each coordinate Mg(2+). Lys615 is subject to N6-acetyllysine.

Belongs to the ATP-dependent AMP-binding enzyme family. It depends on Mg(2+) as a cofactor. In terms of processing, acetylated. Deacetylation by the SIR2-homolog deacetylase activates the enzyme.

It catalyses the reaction acetate + ATP + CoA = acetyl-CoA + AMP + diphosphate. In terms of biological role, catalyzes the conversion of acetate into acetyl-CoA (AcCoA), an essential intermediate at the junction of anabolic and catabolic pathways. AcsA undergoes a two-step reaction. In the first half reaction, AcsA combines acetate with ATP to form acetyl-adenylate (AcAMP) intermediate. In the second half reaction, it can then transfer the acetyl group from AcAMP to the sulfhydryl group of CoA, forming the product AcCoA. The chain is Acetyl-coenzyme A synthetase from Gemmatimonas aurantiaca (strain DSM 14586 / JCM 11422 / NBRC 100505 / T-27).